The primary structure comprises 429 residues: Tyrosine--tRNA ligase (429 aa).

Tyr-36 contributes to the L-tyrosine binding site. A 'HIGH' region motif is present at residues 41–50; sequence PTAASLHAGH. The L-tyrosine site is built by Tyr-171 and Gln-175. Positions 231 to 235 match the 'KMSKS' region motif; that stretch reads KFGKS. Lys-234 contributes to the ATP binding site. An S4 RNA-binding domain is found at 360 to 417; it reads ATIVDLLVATGLAESRGAARRTVNEGGAAVNNQKIADPDWTPADGDYLHGRWLVVRRG.

The protein belongs to the class-I aminoacyl-tRNA synthetase family. TyrS type 1 subfamily. In terms of assembly, homodimer.

Its subcellular location is the cytoplasm. It carries out the reaction tRNA(Tyr) + L-tyrosine + ATP = L-tyrosyl-tRNA(Tyr) + AMP + diphosphate + H(+). Catalyzes the attachment of tyrosine to tRNA(Tyr) in a two-step reaction: tyrosine is first activated by ATP to form Tyr-AMP and then transferred to the acceptor end of tRNA(Tyr). In Nocardia farcinica (strain IFM 10152), this protein is Tyrosine--tRNA ligase.